A 417-amino-acid polypeptide reads, in one-letter code: MNKIIVNGGKSLKGEVNINSAKNSVLPIIAASILSGDKCIIENAPMLEDVFVISEVLKSISSEVDIDRDNNKIIIDTSNICNSEPCSELVKKLRASFLIMGPMISRFGNFKISLPGGCNIGTRPIDLHLKGLNALGADINIGYGYVEAKADKLKGNKIYLDFPSVGATENLMMAAVLAEGDTIIQNAAEEPEIEDLAKFLNSMGANIVGAGTDTINIIGVKDLKGVVHKPIYDRIEAGTFMTAAAITRSKIKLNGVNEGHLRPIIAKLTEIGVKIDTNGDSMIVDGNHQLKPVDIKTMPYPGFPTDMQAQTMALLTSIEGTSIVTETIFENRFMHATEMKRMGSNIKIDGRSAVIEGGNELTGCEVKATDLRAGAALILCGLVARGSTNVTDVYHIDRGYANIEKKLQALGAEIYRI.

22–23 (KN) contributes to the phosphoenolpyruvate binding site. Arginine 94 is a binding site for UDP-N-acetyl-alpha-D-glucosamine. Residue cysteine 118 is the Proton donor of the active site. Residue cysteine 118 is modified to 2-(S-cysteinyl)pyruvic acid O-phosphothioketal. UDP-N-acetyl-alpha-D-glucosamine-binding positions include 123 to 127 (RPIDL), aspartate 306, and isoleucine 328.

The protein belongs to the EPSP synthase family. MurA subfamily.

It is found in the cytoplasm. It catalyses the reaction phosphoenolpyruvate + UDP-N-acetyl-alpha-D-glucosamine = UDP-N-acetyl-3-O-(1-carboxyvinyl)-alpha-D-glucosamine + phosphate. It participates in cell wall biogenesis; peptidoglycan biosynthesis. Cell wall formation. Adds enolpyruvyl to UDP-N-acetylglucosamine. The polypeptide is UDP-N-acetylglucosamine 1-carboxyvinyltransferase 2 (Clostridium tetani (strain Massachusetts / E88)).